Consider the following 323-residue polypeptide: Ribosomal RNA small subunit methyltransferase H (323 aa).

S-adenosyl-L-methionine-binding positions include 39–41, D57, F84, D103, and Q110; that span reads GGY.

It belongs to the methyltransferase superfamily. RsmH family.

Its subcellular location is the cytoplasm. It carries out the reaction cytidine(1402) in 16S rRNA + S-adenosyl-L-methionine = N(4)-methylcytidine(1402) in 16S rRNA + S-adenosyl-L-homocysteine + H(+). In terms of biological role, specifically methylates the N4 position of cytidine in position 1402 (C1402) of 16S rRNA. This Gluconobacter oxydans (strain 621H) (Gluconobacter suboxydans) protein is Ribosomal RNA small subunit methyltransferase H.